Here is a 211-residue protein sequence, read N- to C-terminus: Thiamine-phosphate synthase (211 aa).

Residues glutamine 37–lysine 41 and asparagine 69 each bind 4-amino-2-methyl-5-(diphosphooxymethyl)pyrimidine. The Mg(2+) site is built by aspartate 70 and aspartate 89. Serine 108 is a 4-amino-2-methyl-5-(diphosphooxymethyl)pyrimidine binding site. Threonine 134 to threonine 136 is a binding site for 2-[(2R,5Z)-2-carboxy-4-methylthiazol-5(2H)-ylidene]ethyl phosphate. A 4-amino-2-methyl-5-(diphosphooxymethyl)pyrimidine-binding site is contributed by lysine 137. 2-[(2R,5Z)-2-carboxy-4-methylthiazol-5(2H)-ylidene]ethyl phosphate is bound by residues glycine 166 and valine 186–serine 187.

Belongs to the thiamine-phosphate synthase family. Mg(2+) is required as a cofactor.

It catalyses the reaction 2-[(2R,5Z)-2-carboxy-4-methylthiazol-5(2H)-ylidene]ethyl phosphate + 4-amino-2-methyl-5-(diphosphooxymethyl)pyrimidine + 2 H(+) = thiamine phosphate + CO2 + diphosphate. The enzyme catalyses 2-(2-carboxy-4-methylthiazol-5-yl)ethyl phosphate + 4-amino-2-methyl-5-(diphosphooxymethyl)pyrimidine + 2 H(+) = thiamine phosphate + CO2 + diphosphate. It carries out the reaction 4-methyl-5-(2-phosphooxyethyl)-thiazole + 4-amino-2-methyl-5-(diphosphooxymethyl)pyrimidine + H(+) = thiamine phosphate + diphosphate. It participates in cofactor biosynthesis; thiamine diphosphate biosynthesis; thiamine phosphate from 4-amino-2-methyl-5-diphosphomethylpyrimidine and 4-methyl-5-(2-phosphoethyl)-thiazole: step 1/1. Its function is as follows. Condenses 4-methyl-5-(beta-hydroxyethyl)thiazole monophosphate (THZ-P) and 2-methyl-4-amino-5-hydroxymethyl pyrimidine pyrophosphate (HMP-PP) to form thiamine monophosphate (TMP). This chain is Thiamine-phosphate synthase, found in Salmonella choleraesuis (strain SC-B67).